Here is a 376-residue protein sequence, read N- to C-terminus: Beta-centractin (376 aa).

At Met1 the chain carries N-acetylmethionine. The residue at position 4 (Tyr4) is a 3'-nitrotyrosine.

Belongs to the actin family. ARP1 subfamily.

The protein localises to the cytoplasm. It is found in the cytoskeleton. The protein resides in the microtubule organizing center. It localises to the centrosome. In terms of biological role, component of a multi-subunit complex involved in microtubule based vesicle motility. It is associated with the centrosome. The chain is Beta-centractin (ACTR1B) from Homo sapiens (Human).